Reading from the N-terminus, the 517-residue chain is MAAPEQPLAISRGCTSSSSLSPPRGDRTLLVRHLPAELTAEEKEDLLKYFGAQSVRVLSDKGRLKHTAFATFPNEKAAIKALTRLHQLKLLGHTLVVEFAKEQDRVHSPCPTSGSEKKKRSDDPVEDDKEKKELGYLTVENGIAPNHGLTFPLNSCLKYMYPPPSSTILANIVNALASVPKFYVQVLHLMNKMNLPTPFGPITARPPMYEDYMPLHAPLPPTSPQPPEEPPLPEEDEELSSEESEYESTDDEDRQRMNKLMELANLQPKRPKTIKQRHVRKKRKIKDMLNTPLCPSHSSLHPVLLPSDVFDQPQPVGNKRIEFHISTDMPAAFKKDLEKEQNCEEKNHDLPATEVDASNIGFGKIFPKPNLDITEEIKEDSDEMPSECISRRELEKGRISREEMETLSVFRSYEPGEPNCRIYVKNLAKHVEEKDLKYIFGRYVDFSSETRRIMFDIRLMKEGRMKGQAFVGLPNEKAAAKALKEANGYVLFGKPMVVQFARSARPKQDPKEGKRKC.

The interval 1 to 26 (MAAPEQPLAISRGCTSSSSLSPPRGD) is disordered. The residue at position 21 (S21) is a Phosphoserine. The RRM 1 domain occupies 27–102 (RTLLVRHLPA…HTLVVEFAKE (76 aa)). Disordered regions lie at residues 106-130 (VHSP…DDKE) and 213-254 (MPLH…DEDR). S108 bears the Phosphoserine mark. Over residues 115–130 (SEKKKRSDDPVEDDKE) the composition is skewed to basic and acidic residues. Over residues 217–230 (APLPPTSPQPPEEP) the composition is skewed to pro residues. Over residues 231–252 (PLPEEDEELSSEESEYESTDDE) the composition is skewed to acidic residues. Residues 420 to 503 (CRIYVKNLAK…KPMVVQFARS (84 aa)) enclose the RRM 2 domain.

Component of the U11/U12 snRNPs that are part of the U12-type spliceosome. Found in a complex with m(7)G-capped U12 snRNA. Interacts with PDCD7.

The protein resides in the nucleus. Its function is as follows. Participates in pre-mRNA U12-dependent splicing, performed by the minor spliceosome which removes U12-type introns. U12-type introns comprises less than 1% of all non-coding sequences. Binds to the 3'-stem-loop of m(7)G-capped U12 snRNA. The protein is RNA-binding region-containing protein 3 (RNPC3) of Pongo abelii (Sumatran orangutan).